The primary structure comprises 89 residues: Large ribosomal subunit protein bL31B (89 aa).

Belongs to the bacterial ribosomal protein bL31 family. Type B subfamily. In terms of assembly, part of the 50S ribosomal subunit.

This is Large ribosomal subunit protein bL31B from Aeromonas hydrophila subsp. hydrophila (strain ATCC 7966 / DSM 30187 / BCRC 13018 / CCUG 14551 / JCM 1027 / KCTC 2358 / NCIMB 9240 / NCTC 8049).